We begin with the raw amino-acid sequence, 499 residues long: Ent-kaurenoic acid oxidase 1 (499 aa).

A helical membrane pass occupies residues 5 to 25; sequence AWWAVAAVVAALAVVALDAAV. Residue cysteine 443 coordinates heme.

It belongs to the cytochrome P450 family. It depends on heme as a cofactor.

It localises to the endoplasmic reticulum membrane. It catalyses the reaction ent-kaur-16-en-19-oate + 3 reduced [NADPH--hemoprotein reductase] + 3 O2 = gibberellin A12 + 3 oxidized [NADPH--hemoprotein reductase] + 4 H2O + 4 H(+). The enzyme catalyses ent-kaur-16-en-19-oate + reduced [NADPH--hemoprotein reductase] + O2 = ent-7alpha-hydroxykaur-16-en-19-oate + oxidized [NADPH--hemoprotein reductase] + H2O + H(+). It carries out the reaction ent-7alpha-hydroxykaur-16-en-19-oate + reduced [NADPH--hemoprotein reductase] + O2 = gibberellin A12 aldehyde + oxidized [NADPH--hemoprotein reductase] + 2 H2O + H(+). The catalysed reaction is gibberellin A12 aldehyde + reduced [NADPH--hemoprotein reductase] + O2 = gibberellin A12 + oxidized [NADPH--hemoprotein reductase] + H2O + 2 H(+). The protein operates within plant hormone biosynthesis; gibberellin biosynthesis. In terms of biological role, catalyzes three successive oxidations of ent-kaurenoic acid giving gibberellin 12 (GA12), a key step in gibberellins (GAs) biosynthesis. GAs, which are involved many processes, including stem elongation, play a central role in plant development. This is Ent-kaurenoic acid oxidase 1 from Hordeum vulgare (Barley).